Here is a 1105-residue protein sequence, read N- to C-terminus: Probable diguanylate cyclase DgcE (1105 aa).

Transmembrane regions (helical) follow at residues 9–29 (LIAL…SFIF), 38–58 (QFGT…VAFY), 64–84 (MWPG…ILLF), 88–108 (SLNM…AVLL), 127–147 (LALG…VLLT), 156–176 (FLIW…LGLL), 190–207 (LLFE…LSWL), 211–228 (YLPW…WSAV), 236–256 (FLIF…DPSL), and 270–290 (WLPF…MYAF). A PAS 1 domain is found at 300–370 (SETHFRNAME…QQVEKLISGE (71 aa)). 2 consecutive PAC domains span residues 374 to 426 (YSME…VNQQ) and 501 to 552 (FKLE…ALFQ). Residues 553 to 623 (EKERLHITLD…LMENIYSADT (71 aa)) enclose the PAS 2 domain. The region spanning 626 to 680 (SAIEQDVVLHCRSGGSYDVHYSITPLSTLDGSNIGSVLVIQDVTESRKMLRQLSY) is the PAC 3 domain. In terms of domain architecture, GGDEF spans 712–845 (QRHALVFIDL…GRGRVTVYEP (134 aa)). Mg(2+) is bound at residue Asp720. Substrate-binding residues include Asn728, His733, and Asp737. Asp763 is a binding site for Mg(2+). The active-site Proton acceptor is the Asp763. Arg783 is a binding site for substrate. Positions 855-1104 (AAMSLDEQWR…LLVNSSYFAI (250 aa)) constitute an EAL domain.

Homodimer. The cofactor is Mg(2+).

It localises to the cell inner membrane. It catalyses the reaction 2 GTP = 3',3'-c-di-GMP + 2 diphosphate. It participates in purine metabolism; 3',5'-cyclic di-GMP biosynthesis. In terms of biological role, catalyzes the synthesis of cyclic-di-GMP (c-di-GMP) via the condensation of 2 GTP molecules. Involved in the control of the switch from cell motility to adhesion via regulation of cellular levels of c-di-GMP. Part of a signaling cascade that regulates curli biosynthesis. The cascade is composed of two c-di-GMP control modules, in which c-di-GMP controlled by the DgcE/PdeH pair (module I) regulates the activity of the DgcM/PdeR pair (module II), which in turn regulates activity of the transcription factor MlrA and expression of the master biofilm regulator csgD. The protein is Probable diguanylate cyclase DgcE of Escherichia coli (strain K12).